Consider the following 209-residue polypeptide: Thymidylate kinase (209 aa).

An ATP-binding site is contributed by Gly-10–Ser-17.

Belongs to the thymidylate kinase family.

The enzyme catalyses dTMP + ATP = dTDP + ADP. In terms of biological role, phosphorylation of dTMP to form dTDP in both de novo and salvage pathways of dTTP synthesis. This Francisella tularensis subsp. holarctica (strain OSU18) protein is Thymidylate kinase.